A 540-amino-acid chain; its full sequence is Chaperonin GroEL 2 (540 aa).

Residues 30–33 (TLGP), Lys-51, 87–91 (DGTTT), Gly-415, 480–482 (NAL), and Asp-496 each bind ATP.

The protein belongs to the chaperonin (HSP60) family. Forms a cylinder of 14 subunits composed of two heptameric rings stacked back-to-back. Interacts with the co-chaperonin GroES.

Its subcellular location is the cytoplasm. The enzyme catalyses ATP + H2O + a folded polypeptide = ADP + phosphate + an unfolded polypeptide.. Together with its co-chaperonin GroES, plays an essential role in assisting protein folding. The GroEL-GroES system forms a nano-cage that allows encapsulation of the non-native substrate proteins and provides a physical environment optimized to promote and accelerate protein folding. This chain is Chaperonin GroEL 2, found in Protochlamydia amoebophila (strain UWE25).